Reading from the N-terminus, the 463-residue chain is Probable diacyglycerol O-acyltransferase tgs1 (463 aa).

At methionine 1 the chain carries N-acetylmethionine. The active-site Proton acceptor is the histidine 137.

This sequence belongs to the long-chain O-acyltransferase family.

The enzyme catalyses an acyl-CoA + a 1,2-diacyl-sn-glycerol = a triacyl-sn-glycerol + CoA. It carries out the reaction di-(9Z)-octadecenoylglycerol + (9Z)-octadecenoyl-CoA = 1,2,3-tri-(9Z-octadecenoyl)-glycerol + CoA. The protein operates within glycerolipid metabolism; triacylglycerol biosynthesis. Its function is as follows. Catalyzes the terminal and only committed step in triacylglycerol synthesis by using diacylglycerol and fatty acyl CoA as substrates. Required for storage lipid synthesis. Upon expression in E.coli functions as a triacylglycerol synthase, making triacylglycerol (TG) from diolein and long-chain fatty acyl-CoA. Prefers C(26:0)-CoA over C(18:1)-CoA. TG synthesis activity increases in M.tuberculosis upon oxygen depletion and NO treatment, with concomitant accumulation of TG in inclusion bodies. As disruption of the gene encoding this protein obviates TG synthesis this seems to be the major enzyme involved in production of TG. Has no wax synthase activity to produce wax esters. This is Probable diacyglycerol O-acyltransferase tgs1 (tgs1) from Mycobacterium tuberculosis (strain ATCC 25618 / H37Rv).